The primary structure comprises 386 residues: Protein phosphatase methylesterase 1 (386 aa).

The segment at 1 to 38 is disordered; the sequence is MSALEKSMHLGRLPSRPPLPGSGGSQSGAKMRMGPGRK. S15 bears the Phosphoserine mark. R16 is modified (asymmetric dimethylarginine; alternate). Position 16 is an omega-N-methylarginine; alternate (R16). Phosphoserine is present on S42. Residues S156 and D181 contribute to the active site. Acidic residues predominate over residues 254-265; sequence IIEEEEEDEEGS. Positions 254–280 are disordered; that stretch reads IIEEEEEDEEGSESISKRKKEDDMETK. The span at 268–280 shows a compositional bias: basic and acidic residues; it reads ISKRKKEDDMETK. H349 is an active-site residue.

This sequence belongs to the AB hydrolase superfamily. In terms of assembly, binds PPP2CA and PPP2CB. Phosphorylated by SIK1 following increases in intracellular sodium, leading to dissociation from the protein phosphatase 2A (PP2A) complex and subsequent dephosphorylation of sodium/potassium-transporting ATPase ATP1A1.

The catalysed reaction is [phosphatase 2A protein]-C-terminal L-leucine methyl ester + H2O = [phosphatase 2A protein]-C-terminal L-leucine + methanol + H(+). In terms of biological role, demethylates proteins that have been reversibly carboxymethylated. Demethylates PPP2CB (in vitro) and PPP2CA. Binding to PPP2CA displaces the manganese ion and inactivates the enzyme. The sequence is that of Protein phosphatase methylesterase 1 (PPME1) from Homo sapiens (Human).